Here is a 111-residue protein sequence, read N- to C-terminus: Transcription factor S (111 aa).

Zn(2+)-binding residues include Cys4, Cys7, Cys24, Cys27, Cys72, Cys75, Cys100, and Cys103. Residues 4–27 (CPKCGSMMMPRKENGKTVYKCSKC) form a C4-type zinc finger. The TFIIS-type zinc finger occupies 68–108 (RGISCPSCGNDEAYFWILQTRSADEPATRFYKCTKCGKVWR).

It belongs to the archaeal RpoM/eukaryotic RPA12/RPB9/RPC11 RNA polymerase family.

Its function is as follows. Induces RNA cleavage activity in the RNA polymerase. In its presence, the cleavage activity of the RNA polymerase truncates the RNA back to position +15 in a stepwise manner by releasing mainly dinucleotides from the 3'-end of the nascent RNA. The truncated RNAs are able to continue elongation. Involved in transcriptional proofreading and fidelity. Misincorporation of nucleotides during elongation of transcription leads to arrested elongation complexes which are rescued by TFS-promoted removal of a dinucleotide from the 3'-end. TFS is able to induce a cleavage resynthesis cycle in stalled elongation complexes (resulting from the next missing nucleotide or a reduced incorporation rate of a wrong nucleotide) preventing misincorporation and enabling proofreading in a post-incorporation manner. Pausing of elongation complexes is the main determinant of TFS-induced RNA cleavage. This is Transcription factor S from Sulfolobus acidocaldarius (strain ATCC 33909 / DSM 639 / JCM 8929 / NBRC 15157 / NCIMB 11770).